Here is a 370-residue protein sequence, read N- to C-terminus: Histidinol-phosphate aminotransferase 2 (370 aa).

Position 230 is an N6-(pyridoxal phosphate)lysine (Lys230).

It belongs to the class-II pyridoxal-phosphate-dependent aminotransferase family. Histidinol-phosphate aminotransferase subfamily. Homodimer. It depends on pyridoxal 5'-phosphate as a cofactor.

The catalysed reaction is L-histidinol phosphate + 2-oxoglutarate = 3-(imidazol-4-yl)-2-oxopropyl phosphate + L-glutamate. The protein operates within amino-acid biosynthesis; L-histidine biosynthesis; L-histidine from 5-phospho-alpha-D-ribose 1-diphosphate: step 7/9. The sequence is that of Histidinol-phosphate aminotransferase 2 from Pseudomonas fluorescens (strain Pf0-1).